The sequence spans 680 residues: Zinc finger protein OBI1 (680 aa).

Residues 16–87 (VSFEDVAVDF…AEATEQCLPG (72 aa)) enclose the KRAB domain. The C2H2-type 1; degenerate zinc finger occupies 263-280 (CHKIFPNKTELSNHDAMH). 8 consecutive C2H2-type zinc fingers follow at residues 455–477 (FRCNDCLKTFSHKSQLERHQRMH), 483–505 (HECKECRKAFCHKSHLIRHQGIH), 511–533 (YECNECKKSFYLRSQLTLHERTH), 539–561 (FECKECRKAFSRNSHLTQHQKIH), 567–589 (HKCKECGNAFARKSHLIQHQKTH), 595–617 (YECKECRKAFSRKSQLMQHETTH), 623–645 (YECKECRKTFYLKAYLTRHQVIH), and 651–673 (FECKKCGKAFSRKSYLTRHQKIH).

Polyubiquitinated, leading to its degradation via the ubiquitin-proteasome pathway. In terms of tissue distribution, expressed during osteogenic differentiation where levels increase from the first days of differentiation and remain high during the whole process. Highly expressed in lung.

Its subcellular location is the nucleus. Its function is as follows. May modulate osteogenic differentiation, at least in part, through the bone morphogenetic protein (BMP) signaling pathway, increasing RUNX2 activation and leading to osteoblast commitment and maturation. The polypeptide is Zinc finger protein OBI1 (ObI1) (Mus musculus (Mouse)).